Here is a 299-residue protein sequence, read N- to C-terminus: ATP phosphoribosyltransferase (299 aa).

This sequence belongs to the ATP phosphoribosyltransferase family. Long subfamily. Mg(2+) is required as a cofactor.

It localises to the cytoplasm. The catalysed reaction is 1-(5-phospho-beta-D-ribosyl)-ATP + diphosphate = 5-phospho-alpha-D-ribose 1-diphosphate + ATP. It participates in amino-acid biosynthesis; L-histidine biosynthesis; L-histidine from 5-phospho-alpha-D-ribose 1-diphosphate: step 1/9. Feedback inhibited by histidine. Its function is as follows. Catalyzes the condensation of ATP and 5-phosphoribose 1-diphosphate to form N'-(5'-phosphoribosyl)-ATP (PR-ATP). Has a crucial role in the pathway because the rate of histidine biosynthesis seems to be controlled primarily by regulation of HisG enzymatic activity. The protein is ATP phosphoribosyltransferase of Shewanella pealeana (strain ATCC 700345 / ANG-SQ1).